Here is a 445-residue protein sequence, read N- to C-terminus: UDP-N-acetylmuramoylalanine--D-glutamate ligase (445 aa).

117–123 (GSNGKTT) serves as a coordination point for ATP.

Belongs to the MurCDEF family.

It is found in the cytoplasm. The enzyme catalyses UDP-N-acetyl-alpha-D-muramoyl-L-alanine + D-glutamate + ATP = UDP-N-acetyl-alpha-D-muramoyl-L-alanyl-D-glutamate + ADP + phosphate + H(+). It participates in cell wall biogenesis; peptidoglycan biosynthesis. In terms of biological role, cell wall formation. Catalyzes the addition of glutamate to the nucleotide precursor UDP-N-acetylmuramoyl-L-alanine (UMA). This Neisseria meningitidis serogroup B (strain ATCC BAA-335 / MC58) protein is UDP-N-acetylmuramoylalanine--D-glutamate ligase.